An 807-amino-acid polypeptide reads, in one-letter code: AP-5 complex subunit zeta-1 (807 aa).

In terms of assembly, probably part of the adaptor protein complex 5 (AP-5) a tetramer composed of AP5B1, AP5M1, AP5S1 and AP5Z1. Interacts with ZFYVE26 and SPG11.

The protein resides in the cytoplasm. It localises to the nucleus. Its function is as follows. As part of AP-5, a probable fifth adaptor protein complex it may be involved in endosomal transport. According to PubMed:20613862 it is a putative helicase required for efficient homologous recombination DNA double-strand break repair. In Homo sapiens (Human), this protein is AP-5 complex subunit zeta-1 (AP5Z1).